A 206-amino-acid polypeptide reads, in one-letter code: MARYLGPKLKLSRREGTDLFLKSGVRAIDTKCKIDNAPGVHGARRGRLSEYGVQLREKQKVRRMYGVLEKQFRNYYKEAARLKGNTGENLLQLLEGRLDNVVYRMGFGATRAEARQLVSHKAILVNGKVVNVPSFKVAANDVVSIREKAKQQARIKAALEVAEQREKPTWIEVDGGKMEGTFKRMPERSDLSADINEQLIVELYSK.

Residues 96-156 enclose the S4 RNA-binding domain; the sequence is GRLDNVVYRM…EKAKQQARIK (61 aa).

The protein belongs to the universal ribosomal protein uS4 family. Part of the 30S ribosomal subunit. Contacts protein S5. The interaction surface between S4 and S5 is involved in control of translational fidelity.

Functionally, one of the primary rRNA binding proteins, it binds directly to 16S rRNA where it nucleates assembly of the body of the 30S subunit. In terms of biological role, with S5 and S12 plays an important role in translational accuracy. The chain is Small ribosomal subunit protein uS4 from Vibrio campbellii (strain ATCC BAA-1116).